We begin with the raw amino-acid sequence, 196 residues long: ATP-dependent Clp protease proteolytic subunit (196 aa).

Residue Ser-97 is the Nucleophile of the active site. Residue His-122 is part of the active site.

Belongs to the peptidase S14 family. As to quaternary structure, fourteen ClpP subunits assemble into 2 heptameric rings which stack back to back to give a disk-like structure with a central cavity, resembling the structure of eukaryotic proteasomes.

Its subcellular location is the cytoplasm. It carries out the reaction Hydrolysis of proteins to small peptides in the presence of ATP and magnesium. alpha-casein is the usual test substrate. In the absence of ATP, only oligopeptides shorter than five residues are hydrolyzed (such as succinyl-Leu-Tyr-|-NHMec, and Leu-Tyr-Leu-|-Tyr-Trp, in which cleavage of the -Tyr-|-Leu- and -Tyr-|-Trp bonds also occurs).. Functionally, cleaves peptides in various proteins in a process that requires ATP hydrolysis. Has a chymotrypsin-like activity. Plays a major role in the degradation of misfolded proteins. In Lacticaseibacillus paracasei (strain ATCC 334 / BCRC 17002 / CCUG 31169 / CIP 107868 / KCTC 3260 / NRRL B-441) (Lactobacillus paracasei), this protein is ATP-dependent Clp protease proteolytic subunit.